A 1694-amino-acid polypeptide reads, in one-letter code: Immunoglobulin A1 protease autotransporter (1694 aa).

The first 25 residues, 1–25 (MLNKKFKLNFIALTVAYALTPYTEA), serve as a signal peptide directing secretion. The Peptidase S6 domain occupies 26–332 (ALVRDDVDYQ…NIYKPEFAKT (307 aa)). Ser-288 is an active-site residue. The interval 991–1403 (VEKRNQTVDT…GSDRSTVALR (413 aa)) is disordered. Residues 997 to 1021 (TVDTTNITTPNNIQADVPSVPSNNE) are compositionally biased toward polar residues. The span at 1037 to 1047 (TPSETTETVAE) shows a compositional bias: low complexity. Over residues 1049–1061 (SKQESKTVEKNEQ) the composition is skewed to basic and acidic residues. Residues 1082–1095 (KANTQTNEVAQSGS) show a composition bias toward polar residues. 2 stretches are compositionally biased toward basic and acidic residues: residues 1104-1124 (EIKE…KDEI) and 1142-1154 (APKE…KVEE). 2 stretches are compositionally biased toward polar residues: residues 1155–1178 (TQVQ…SPNS) and 1199–1210 (VSKNQTENTTDQ). A compositionally biased stretch (basic and acidic residues) spans 1211 to 1226 (PTEREKTAKVETEKTQ). Polar residues-rich tracts occupy residues 1227–1247 (EPPQ…TVQP), 1255–1297 (NVPT…TAIT), and 1308–1336 (TETA…NSES). The span at 1352–1370 (ETSAEETTAASTDETTIAD) shows a compositional bias: low complexity. Residues 1374–1384 (RSKPNRRSRRS) are compositionally biased toward basic residues. An Autotransporter domain is found at 1442–1694 (NNEGQYNVWV…TAELKLSFSF (253 aa)).

The protein localises to the periplasm. Its subcellular location is the secreted. The protein resides in the cell surface. It localises to the cell outer membrane. The enzyme catalyses Cleavage of immunoglobulin A molecules at certain Pro-|-Xaa bonds in the hinge region. No small molecule substrates are known.. Virulence factor; cleaves host immunoglobulin A producing intact Fc and Fab fragments. The sequence is that of Immunoglobulin A1 protease autotransporter (iga) from Haemophilus influenzae (strain ATCC 51907 / DSM 11121 / KW20 / Rd).